Reading from the N-terminus, the 286-residue chain is Energy-coupling factor transporter ATP-binding protein EcfA2 (286 aa).

In terms of domain architecture, ABC transporter spans 3 to 246 (IRFDNVSYTY…KEKLADWHIA (244 aa)). 40-47 (GQTGSGKS) provides a ligand contact to ATP.

It belongs to the ABC transporter superfamily. Energy-coupling factor EcfA family. As to quaternary structure, forms a stable energy-coupling factor (ECF) transporter complex composed of 2 membrane-embedded substrate-binding proteins (S component), 2 ATP-binding proteins (A component) and 2 transmembrane proteins (T component).

Its subcellular location is the cell membrane. Its function is as follows. ATP-binding (A) component of a common energy-coupling factor (ECF) ABC-transporter complex. Unlike classic ABC transporters this ECF transporter provides the energy necessary to transport a number of different substrates. This is Energy-coupling factor transporter ATP-binding protein EcfA2 from Staphylococcus aureus (strain bovine RF122 / ET3-1).